The primary structure comprises 1040 residues: Multidrug resistance protein MdtB (1040 aa).

12 helical membrane-spanning segments follow: residues 16–36, 347–367, 369–389, 396–416, 440–460, 472–492, 537–557, 863–883, 888–908, 911–931, 968–988, and 998–1018; these read FIMR…AGII, LMMA…NIPA, IIPG…MVFL, LTLM…IVVI, IGFT…PLLF, FAIT…TLTP, WLTL…WVFI, LGST…VLGI, FIHP…ALLA, IAGS…IGIV, ILMT…STGV, and IGMV…TPVI.

The protein belongs to the resistance-nodulation-cell division (RND) (TC 2.A.6) family. MdtB subfamily. As to quaternary structure, part of a tripartite efflux system composed of MdtA, MdtB and MdtC. MdtB forms a heteromultimer with MdtC.

The protein resides in the cell inner membrane. Its function is as follows. The MdtABC tripartite complex confers resistance against novobiocin and deoxycholate. This chain is Multidrug resistance protein MdtB, found in Escherichia coli O139:H28 (strain E24377A / ETEC).